Reading from the N-terminus, the 196-residue chain is Vascular-related unknown protein 2 (196 aa).

Residues Ala84–Lys130 are disordered. The span at Glu103 to Thr121 shows a compositional bias: acidic residues.

Functionally, involved in the regulation of plant growth. The protein is Vascular-related unknown protein 2 of Arabidopsis thaliana (Mouse-ear cress).